We begin with the raw amino-acid sequence, 409 residues long: SPI-1 type 3 secretion system translocon protein SctB (409 aa).

A helical transmembrane segment spans residues 119–140 (ISGMSSSAVALLAAANTLMLTL).

This sequence belongs to the SctB/SipC family. In terms of assembly, the core secretion machinery of the T3SS is composed of approximately 20 different proteins, including cytoplasmic components, a base, an export apparatus and a needle. This subunit is involved in the formation of a pore, called the translocon, in host membrane.

The protein localises to the secreted. It is found in the host membrane. Component of the type III secretion system 1 (SPI-1 T3SS), also called injectisome, which is used to inject bacterial effector proteins into eukaryotic host cells. SipB/SctE1 and SipC/SctB1 are inserted into the host membrane where they form a pore and allow the translocation of effector proteins into the cytosol of target cells. This Salmonella typhimurium (strain 14028s / SGSC 2262) protein is SPI-1 type 3 secretion system translocon protein SctB.